A 426-amino-acid polypeptide reads, in one-letter code: UPF0597 protein CLI_1810 (426 aa).

The protein belongs to the UPF0597 family.

This chain is UPF0597 protein CLI_1810, found in Clostridium botulinum (strain Langeland / NCTC 10281 / Type F).